Here is a 123-residue protein sequence, read N- to C-terminus: uncharacterized protein (123 aa).

2 disordered regions span residues 1-21 (MGAP…KLFK) and 82-123 (EKTA…EDES).

This is an uncharacterized protein from Homo sapiens (Human).